A 381-amino-acid polypeptide reads, in one-letter code: Lipid-A-disaccharide synthase (381 aa).

This sequence belongs to the LpxB family.

The catalysed reaction is a lipid X + a UDP-2-N,3-O-bis[(3R)-3-hydroxyacyl]-alpha-D-glucosamine = a lipid A disaccharide + UDP + H(+). It functions in the pathway bacterial outer membrane biogenesis; LPS lipid A biosynthesis. Its function is as follows. Condensation of UDP-2,3-diacylglucosamine and 2,3-diacylglucosamine-1-phosphate to form lipid A disaccharide, a precursor of lipid A, a phosphorylated glycolipid that anchors the lipopolysaccharide to the outer membrane of the cell. The sequence is that of Lipid-A-disaccharide synthase from Psychromonas ingrahamii (strain DSM 17664 / CCUG 51855 / 37).